The sequence spans 67 residues: Large ribosomal subunit protein bL32 (67 aa).

A compositionally biased stretch (basic residues) spans 1-19 (MAVPKRKQSRANTHARRSQ). A disordered region spans residues 1–20 (MAVPKRKQSRANTHARRSQW).

Belongs to the bacterial ribosomal protein bL32 family.

In Leifsonia xyli subsp. xyli (strain CTCB07), this protein is Large ribosomal subunit protein bL32.